Here is a 564-residue protein sequence, read N- to C-terminus: Ovochymase-2 (564 aa).

The first 22 residues, 1–22, serve as a signal peptide directing secretion; sequence MLISRNKLILLLGIVFFERGKS. Positions 23-51 are cleaved as a propeptide — activation peptide; that stretch reads ATLSLPKAPSCGQSLVKVQPWNYFNIFSR. In terms of domain architecture, Peptidase S1 spans 52 to 299; the sequence is ILGGSQVEKG…VLPWIHEHIQ (248 aa). Cysteines 77 and 93 form a disulfide. Catalysis depends on histidine 92, which acts as the Charge relay system. Residue asparagine 104 is glycosylated (N-linked (GlcNAc...) asparagine). Glutamate 119 contributes to the Ca(2+) binding site. The active-site Charge relay system is the aspartate 142. 5 disulfide bridges follow: cysteine 176/cysteine 246, cysteine 207/cysteine 225, cysteine 236/cysteine 265, cysteine 311/cysteine 341, and cysteine 365/cysteine 384. The Charge relay system role is filled by serine 240. CUB domains lie at 311 to 421 and 431 to 543; these read CSEQ…YKAL and CSYL…VSFI. 2 N-linked (GlcNAc...) asparagine glycosylation sites follow: asparagine 415 and asparagine 451. 2 cysteine pairs are disulfide-bonded: cysteine 431–cysteine 458 and cysteine 485–cysteine 506. Asparagine 530 carries N-linked (GlcNAc...) asparagine glycosylation.

The protein belongs to the peptidase S1 family.

It localises to the secreted. In terms of biological role, may be required for sperm ADAM3 processing and consequential sperm fertilizing ability. In vitro, has an endopeptidase activity. This Homo sapiens (Human) protein is Ovochymase-2.